A 494-amino-acid chain; its full sequence is Cytochrome P450 2A3 (494 aa).

The residue at position 131 (Ser-131) is a Phosphoserine. An N6-acetyllysine modification is found at Lys-379. Cys-439 lines the heme pocket.

It belongs to the cytochrome P450 family. Heme serves as cofactor. As to expression, lung.

It localises to the endoplasmic reticulum membrane. The protein resides in the microsome membrane. The enzyme catalyses an organic molecule + reduced [NADPH--hemoprotein reductase] + O2 = an alcohol + oxidized [NADPH--hemoprotein reductase] + H2O + H(+). Functionally, cytochromes P450 are a group of heme-thiolate monooxygenases. In liver microsomes, this enzyme is involved in an NADPH-dependent electron transport pathway. It oxidizes a variety of structurally unrelated compounds, including steroids, fatty acids, and xenobiotics. This is Cytochrome P450 2A3 (Cyp2a3) from Rattus norvegicus (Rat).